Consider the following 466-residue polypeptide: 3-isopropylmalate dehydratase large subunit (466 aa).

The [4Fe-4S] cluster site is built by Cys-346, Cys-406, and Cys-409.

This sequence belongs to the aconitase/IPM isomerase family. LeuC type 1 subfamily. Heterodimer of LeuC and LeuD. It depends on [4Fe-4S] cluster as a cofactor.

It carries out the reaction (2R,3S)-3-isopropylmalate = (2S)-2-isopropylmalate. The protein operates within amino-acid biosynthesis; L-leucine biosynthesis; L-leucine from 3-methyl-2-oxobutanoate: step 2/4. In terms of biological role, catalyzes the isomerization between 2-isopropylmalate and 3-isopropylmalate, via the formation of 2-isopropylmaleate. This chain is 3-isopropylmalate dehydratase large subunit, found in Cytophaga hutchinsonii (strain ATCC 33406 / DSM 1761 / CIP 103989 / NBRC 15051 / NCIMB 9469 / D465).